Consider the following 316-residue polypeptide: Ribosomal RNA small subunit methyltransferase H (316 aa).

Residues 35–37 (GGH), aspartate 55, phenylalanine 79, aspartate 101, and glutamine 108 contribute to the S-adenosyl-L-methionine site. Residues 291 to 316 (AIKPSKDEVDENTRSRSSVLRIAEKL) are disordered. A compositionally biased stretch (basic and acidic residues) spans 294-304 (PSKDEVDENTR).

Belongs to the methyltransferase superfamily. RsmH family.

It localises to the cytoplasm. The enzyme catalyses cytidine(1402) in 16S rRNA + S-adenosyl-L-methionine = N(4)-methylcytidine(1402) in 16S rRNA + S-adenosyl-L-homocysteine + H(+). Functionally, specifically methylates the N4 position of cytidine in position 1402 (C1402) of 16S rRNA. The polypeptide is Ribosomal RNA small subunit methyltransferase H (Vibrio atlanticus (strain LGP32) (Vibrio splendidus (strain Mel32))).